Here is a 272-residue protein sequence, read N- to C-terminus: Phosphoglycolate phosphatase (272 aa).

Residue D19 is the Nucleophile of the active site. Positions 19, 21, and 182 each coordinate Mg(2+).

This sequence belongs to the HAD-like hydrolase superfamily. CbbY/CbbZ/Gph/YieH family. The cofactor is Mg(2+).

The catalysed reaction is 2-phosphoglycolate + H2O = glycolate + phosphate. It functions in the pathway organic acid metabolism; glycolate biosynthesis; glycolate from 2-phosphoglycolate: step 1/1. Its function is as follows. Specifically catalyzes the dephosphorylation of 2-phosphoglycolate. Is involved in the dissimilation of the intracellular 2-phosphoglycolate formed during the DNA repair of 3'-phosphoglycolate ends, a major class of DNA lesions induced by oxidative stress. The polypeptide is Phosphoglycolate phosphatase (Pseudomonas syringae pv. syringae (strain B728a)).